Consider the following 581-residue polypeptide: Kelch-like protein 30 (581 aa).

Residues 33 to 100 (ADVTLLVGDQ…VYTGRLTITQ (68 aa)) form the BTB domain. One can recognise a BACK domain in the interval 135-237 (CLGICEFGEQ…PRPCVQQLLA (103 aa)). Kelch repeat units lie at residues 280–327 (EEDE…ALNS), 328–378 (DVYV…ALNG), 379–423 (EIYA…GCQG), 425–472 (LYLV…ALNG), 474–514 (LYLI…PLGD), and 515–564 (LLYV…TIFL).

The polypeptide is Kelch-like protein 30 (Klhl30) (Mus musculus (Mouse)).